Reading from the N-terminus, the 22-residue chain is Caerin-3.2 (22 aa).

Lysine amide is present on Lys-22.

As to expression, expressed by the skin parotoid and/or rostral glands.

It localises to the secreted. In terms of biological role, antibacterial peptide, that adopts an alpha helical conformation which can disrupt bacterial membranes. Each caerin displays a different antimicrobial specificity. In Ranoidea caerulea (Green tree frog), this protein is Caerin-3.2.